The primary structure comprises 100 residues: NADH-quinone oxidoreductase subunit K (100 aa).

The next 3 helical transmembrane spans lie at 4-24 (LQHG…GLVI), 28-48 (LLFM…AFVV), and 60-80 (VMYI…LALL).

This sequence belongs to the complex I subunit 4L family. In terms of assembly, NDH-1 is composed of 13 different subunits. Subunits NuoA, H, J, K, L, M, N constitute the membrane sector of the complex.

The protein localises to the cell inner membrane. It carries out the reaction a quinone + NADH + 5 H(+)(in) = a quinol + NAD(+) + 4 H(+)(out). Functionally, NDH-1 shuttles electrons from NADH, via FMN and iron-sulfur (Fe-S) centers, to quinones in the respiratory chain. The immediate electron acceptor for the enzyme in this species is believed to be ubiquinone. Couples the redox reaction to proton translocation (for every two electrons transferred, four hydrogen ions are translocated across the cytoplasmic membrane), and thus conserves the redox energy in a proton gradient. The polypeptide is NADH-quinone oxidoreductase subunit K (Shigella boydii serotype 18 (strain CDC 3083-94 / BS512)).